A 649-amino-acid chain; its full sequence is Acetyl-coenzyme A synthetase (649 aa).

Residues 189-192 (RGGK), threonine 311, and asparagine 335 contribute to the CoA site. ATP-binding positions include 387-389 (GEP), 411-416 (DTWWQT), aspartate 500, and arginine 515. Serine 523 contributes to the CoA binding site. Residue arginine 526 participates in ATP binding. Positions 537, 539, and 542 each coordinate Mg(2+). Residue arginine 584 coordinates CoA. Residue lysine 609 is modified to N6-acetyllysine.

The protein belongs to the ATP-dependent AMP-binding enzyme family. Requires Mg(2+) as cofactor. Post-translationally, acetylated. Deacetylation by the SIR2-homolog deacetylase activates the enzyme.

It carries out the reaction acetate + ATP + CoA = acetyl-CoA + AMP + diphosphate. Catalyzes the conversion of acetate into acetyl-CoA (AcCoA), an essential intermediate at the junction of anabolic and catabolic pathways. AcsA undergoes a two-step reaction. In the first half reaction, AcsA combines acetate with ATP to form acetyl-adenylate (AcAMP) intermediate. In the second half reaction, it can then transfer the acetyl group from AcAMP to the sulfhydryl group of CoA, forming the product AcCoA. The protein is Acetyl-coenzyme A synthetase of Sinorhizobium medicae (strain WSM419) (Ensifer medicae).